The primary structure comprises 530 residues: Phosphoenolpyruvate carboxykinase (ATP) (530 aa).

3 residues coordinate substrate: arginine 59, tyrosine 198, and lysine 204. ATP contacts are provided by residues lysine 204, histidine 223, and 239–247; that span reads GLSGTGKTT. Mn(2+) is bound by residues lysine 204 and histidine 223. Aspartate 260 is a binding site for Mn(2+). Residues glutamate 288, arginine 325, 440–441, and threonine 446 each bind ATP; that span reads RI. Residue arginine 325 coordinates substrate.

The protein belongs to the phosphoenolpyruvate carboxykinase (ATP) family. Mn(2+) is required as a cofactor.

The protein localises to the cytoplasm. The enzyme catalyses oxaloacetate + ATP = phosphoenolpyruvate + ADP + CO2. The protein operates within carbohydrate biosynthesis; gluconeogenesis. Its function is as follows. Involved in the gluconeogenesis. Catalyzes the conversion of oxaloacetate (OAA) to phosphoenolpyruvate (PEP) through direct phosphoryl transfer between the nucleoside triphosphate and OAA. The polypeptide is Phosphoenolpyruvate carboxykinase (ATP) (Azobacteroides pseudotrichonymphae genomovar. CFP2).